We begin with the raw amino-acid sequence, 160 residues long: Protein Bel-3 (160 aa).

In terms of assembly, homodimer.

It localises to the host cytoplasm. The chain is Protein Bel-3 (bel3) from Human spumaretrovirus (SFVcpz(hu)).